We begin with the raw amino-acid sequence, 261 residues long: Ribonuclease PH (261 aa).

Phosphate-binding positions include R87 and 125 to 127 (GTR).

Belongs to the RNase PH family. Homohexameric ring arranged as a trimer of dimers.

It catalyses the reaction tRNA(n+1) + phosphate = tRNA(n) + a ribonucleoside 5'-diphosphate. Functionally, phosphorolytic 3'-5' exoribonuclease that plays an important role in tRNA 3'-end maturation. Removes nucleotide residues following the 3'-CCA terminus of tRNAs; can also add nucleotides to the ends of RNA molecules by using nucleoside diphosphates as substrates, but this may not be physiologically important. Probably plays a role in initiation of 16S rRNA degradation (leading to ribosome degradation) during starvation. The polypeptide is Ribonuclease PH (Thermoanaerobacter pseudethanolicus (strain ATCC 33223 / 39E) (Clostridium thermohydrosulfuricum)).